The following is a 62-amino-acid chain: MVQTRSCDYCGDDIEPGTGTMFVHNDGSTVHFCSAKCEKNADLGREPRDVEWTDEEEVEETQ.

Zn(2+)-binding residues include cysteine 7, cysteine 10, cysteine 33, and cysteine 37. Residues 7–37 (CDYCGDDIEPGTGTMFVHNDGSTVHFCSAKC) form a C4-type zinc finger.

Belongs to the eukaryotic ribosomal protein eL24 family. As to quaternary structure, part of the 50S ribosomal subunit. Forms a cluster with proteins L3 and L14. Zn(2+) serves as cofactor.

Binds to the 23S rRNA. The polypeptide is Large ribosomal subunit protein eL24 (Halobacterium salinarum (strain ATCC 29341 / DSM 671 / R1)).